A 200-amino-acid polypeptide reads, in one-letter code: Large ribosomal subunit protein uL4 (200 aa).

Residues 38–80 (GRQGSKQQKTRSDVSGGGKRPWRQKGTGRARAGTTRGPIWRGG) are disordered.

It belongs to the universal ribosomal protein uL4 family. In terms of assembly, part of the 50S ribosomal subunit.

One of the primary rRNA binding proteins, this protein initially binds near the 5'-end of the 23S rRNA. It is important during the early stages of 50S assembly. It makes multiple contacts with different domains of the 23S rRNA in the assembled 50S subunit and ribosome. Functionally, forms part of the polypeptide exit tunnel. In Stutzerimonas stutzeri (strain A1501) (Pseudomonas stutzeri), this protein is Large ribosomal subunit protein uL4.